The primary structure comprises 380 residues: Pregnancy-associated glycoprotein 4 (380 aa).

The first 15 residues, 1 to 15 (MKWLVLLGLVAFSEC), serve as a signal peptide directing secretion. The propeptide at 16 to 53 (IFKIPLRRVKTMRKTLSGKNMLNDVLKEHPYRLPQISF) is activation peptide. In terms of domain architecture, Peptidase A1 spans 71–377 (YVGNITIGTP…DRGNDRIGLA (307 aa)). An N-linked (GlcNAc...) asparagine glycan is attached at asparagine 74. Residue aspartate 89 is part of the active site. Cysteine 102 and cysteine 107 are disulfide-bonded. N-linked (GlcNAc...) asparagine glycosylation occurs at asparagine 125. Cysteine 261 and cysteine 265 are joined by a disulfide. Aspartate 270 is an active-site residue. Cysteine 303 and cysteine 337 are oxidised to a cystine.

It belongs to the peptidase A1 family. In terms of tissue distribution, trophoblast and placental tissue. Produced specifically in the invasive binucleate cells of the placenta.

The protein resides in the secreted. The protein localises to the extracellular space. This chain is Pregnancy-associated glycoprotein 4, found in Ovis aries (Sheep).